The sequence spans 468 residues: Glutamate--tRNA ligase 2 (468 aa).

The 'HIGH' region signature appears at 9–19; it reads PSPTGSLHLGG. The 'KMSKS' region signature appears at 238–242; it reads KLSKR. Lys-241 serves as a coordination point for ATP.

It belongs to the class-I aminoacyl-tRNA synthetase family. Glutamate--tRNA ligase type 1 subfamily. Monomer.

The protein localises to the cytoplasm. It catalyses the reaction tRNA(Glu) + L-glutamate + ATP = L-glutamyl-tRNA(Glu) + AMP + diphosphate. Functionally, catalyzes the attachment of glutamate to tRNA(Glu) in a two-step reaction: glutamate is first activated by ATP to form Glu-AMP and then transferred to the acceptor end of tRNA(Glu). This Anaplasma phagocytophilum (strain HZ) protein is Glutamate--tRNA ligase 2.